A 225-amino-acid polypeptide reads, in one-letter code: NAD(P)H-quinone oxidoreductase subunit K, chloroplastic (225 aa).

4 residues coordinate [4Fe-4S] cluster: C43, C44, C108, and C139.

Belongs to the complex I 20 kDa subunit family. In terms of assembly, NDH is composed of at least 16 different subunits, 5 of which are encoded in the nucleus. The cofactor is [4Fe-4S] cluster.

It localises to the plastid. It is found in the chloroplast thylakoid membrane. It catalyses the reaction a plastoquinone + NADH + (n+1) H(+)(in) = a plastoquinol + NAD(+) + n H(+)(out). The catalysed reaction is a plastoquinone + NADPH + (n+1) H(+)(in) = a plastoquinol + NADP(+) + n H(+)(out). NDH shuttles electrons from NAD(P)H:plastoquinone, via FMN and iron-sulfur (Fe-S) centers, to quinones in the photosynthetic chain and possibly in a chloroplast respiratory chain. The immediate electron acceptor for the enzyme in this species is believed to be plastoquinone. Couples the redox reaction to proton translocation, and thus conserves the redox energy in a proton gradient. This chain is NAD(P)H-quinone oxidoreductase subunit K, chloroplastic, found in Olimarabidopsis pumila (Dwarf rocket).